The sequence spans 466 residues: Argininosuccinate lyase (466 aa).

Belongs to the lyase 1 family. Argininosuccinate lyase subfamily.

Its subcellular location is the cytoplasm. It carries out the reaction 2-(N(omega)-L-arginino)succinate = fumarate + L-arginine. It participates in amino-acid biosynthesis; L-arginine biosynthesis; L-arginine from L-ornithine and carbamoyl phosphate: step 3/3. The chain is Argininosuccinate lyase from Brucella abortus (strain S19).